Reading from the N-terminus, the 367-residue chain is Homeobox protein Nkx-6.1 (367 aa).

Residues 36-133 (YPAAYPPLPA…SSSSSSSASA (98 aa)) form a disordered region. 3 stretches are compositionally biased toward low complexity: residues 48–59 (PSSSSSSSSSSS), 78–91 (GGLS…QQLS), and 110–133 (ASGA…SASA). Positions 102 to 268 (LSRPSMPVAS…KYLAGPERAR (167 aa)) are repressor domain. Arg-189 carries the post-translational modification Asymmetric dimethylarginine. Residues 236 to 295 (RKHTRPTFSGQQIFALEKTFEQTKYLAGPERARLAYSLGMTESQVKVWFQNRRTKWRKKH) constitute a DNA-binding region (homeobox). The disordered stretch occupies residues 294–367 (KHAAEMATAK…LHASEPESSS (74 aa)). Residues 304–317 (KKQDSETERLKGAS) show a composition bias toward basic and acidic residues. The interval 306–367 (QDSETERLKG…LHASEPESSS (62 aa)) is involved in DNA-binding.

As to expression, pancreatic beta cells.

It is found in the nucleus. In terms of biological role, transcription factor which binds to specific A/T-rich DNA sequences in the promoter regions of a number of genes. Involved in the development of insulin-producing beta cells in the islets of Langerhans at the secondary transition. Together with NKX2-2 and IRX3 acts to restrict the generation of motor neurons to the appropriate region of the neural tube. Belongs to the class II proteins of neuronal progenitor factors, which are induced by SHH signals. This Homo sapiens (Human) protein is Homeobox protein Nkx-6.1 (NKX6-1).